An 867-amino-acid chain; its full sequence is Putative tyrosine-protein kinase F09A5.2 (867 aa).

Transmembrane regions (helical) follow at residues 45–65 and 355–375; these read VMKI…FATS and LLLI…AFFV. N-linked (GlcNAc...) asparagine glycosylation is found at N395 and N423. The 291-residue stretch at 467–757 folds into the Protein kinase domain; it reads VQEDHLLGNG…FNEMRGEITV (291 aa). 473-481 serves as a coordination point for ATP; that stretch reads LGNGAFANV. 2 N-linked (GlcNAc...) asparagine glycosylation sites follow: N496 and N500. ATP is bound at residue K516. N-linked (GlcNAc...) asparagine glycosylation is present at N585. The active-site Proton acceptor is D626. Disordered stretches follow at residues 782–821 and 848–867; these read LTMQ…GTCA and SKSM…TYQS. Over residues 801 to 810 the composition is skewed to acidic residues; that stretch reads DMDEDGDYDS. Positions 858-867 are enriched in polar residues; sequence SNSTVSTYQS. N859 carries N-linked (GlcNAc...) asparagine glycosylation.

It belongs to the protein kinase superfamily. Tyr protein kinase family.

The protein localises to the membrane. The enzyme catalyses L-tyrosyl-[protein] + ATP = O-phospho-L-tyrosyl-[protein] + ADP + H(+). The polypeptide is Putative tyrosine-protein kinase F09A5.2 (Caenorhabditis elegans).